We begin with the raw amino-acid sequence, 160 residues long: Transcriptional regulator MraZ (160 aa).

SpoVT-AbrB domains are found at residues 5–50 and 93–136; these read KFDT…GDQV and AVEC…SQAV.

This sequence belongs to the MraZ family. Forms oligomers.

It is found in the cytoplasm. The protein resides in the nucleoid. This is Transcriptional regulator MraZ from Geobacter sp. (strain M21).